Consider the following 269-residue polypeptide: 3-ketodihydrosphingosine reductase (269 aa).

NADPH-binding residues include Gly10, Ser12, Ser13, Gly14, Lys36, and Asp50. The GXSXG motif lies at 10 to 14 (GASSG). Ser12 acts as the Nucleophile; for lipase activity in catalysis. The active-site Proton donor is the Ser128. Tyr142 (proton acceptor) is an active-site residue. Positions 142 and 146 each coordinate NADP(+). NADPH is bound by residues 142 to 146 (YSASK) and 175 to 177 (FNT). Lys146 is an active-site residue. Lys146 (lowers pKa of active site Tyr) is an active-site residue.

It belongs to the short-chain dehydrogenases/reductases (SDR) family.

It catalyses the reaction sphinganine + NADP(+) = 3-oxosphinganine + NADPH + H(+). It participates in lipid metabolism; sphingolipid metabolism. Catalyzes the reduction of 3'-oxosphinganine (3-ketodihydrosphingosine/KDS) to sphinganine (dihydrosphingosine/DHS), the second step of de novo sphingolipid biosynthesis. This is 3-ketodihydrosphingosine reductase from Bacteroides thetaiotaomicron (strain ATCC 29148 / DSM 2079 / JCM 5827 / CCUG 10774 / NCTC 10582 / VPI-5482 / E50).